The sequence spans 800 residues: Elongation factor G, mitochondrial (800 aa).

Residues 1-34 (MSVHTVMRTQVRSLAGMPKAAMRPLGNSFCARRY) constitute a mitochondrion transit peptide. In terms of domain architecture, tr-type G spans 99–385 (SKVRNIGIAA…GICDYLPNPA (287 aa)). Residues 108–115 (AHIDSGKT), 183–187 (DTPGH), and 237–240 (NKMD) contribute to the GTP site.

This sequence belongs to the TRAFAC class translation factor GTPase superfamily. Classic translation factor GTPase family. EF-G/EF-2 subfamily.

It is found in the mitochondrion. Its pathway is protein biosynthesis; polypeptide chain elongation. Mitochondrial GTPase that catalyzes the GTP-dependent ribosomal translocation step during translation elongation. During this step, the ribosome changes from the pre-translocational (PRE) to the post-translocational (POST) state as the newly formed A-site-bound peptidyl-tRNA and P-site-bound deacylated tRNA move to the P and E sites, respectively. Catalyzes the coordinated movement of the two tRNA molecules, the mRNA and conformational changes in the ribosome. The polypeptide is Elongation factor G, mitochondrial (Coccidioides immitis (strain RS) (Valley fever fungus)).